The chain runs to 563 residues: Zinc finger CCHC domain-containing protein 7 (563 aa).

Disordered stretches follow at residues 41–64 (SQNL…VPGA) and 133–157 (SHST…QNSS). The segment covering 133-142 (SHSTPKVSAP) has biased composition (polar residues). Residues 143-157 (QSNNFKSQKSCQNSS) are compositionally biased toward low complexity. CCHC-type zinc fingers lie at residues 265–282 (VVCR…NCPV), 287–304 (PACC…SCPS), 305–322 (RYCL…ECIE), 328–345 (KTCH…ACPE), and 372–389 (VYCC…ECKE). The tract at residues 443 to 494 (KVDAKPPAKKRKKKHPSKKERKGTIRDYECAETKQKKKHKKRKSGLQEIEGD) is disordered. Residues 449–463 (PAKKRKKKHPSKKER) are compositionally biased toward basic residues. Residues 464–476 (KGTIRDYECAETK) show a composition bias toward basic and acidic residues. A compositionally biased stretch (basic residues) spans 477-486 (QKKKHKKRKS).

Component of a nucleolar TRAMP-like complex, an ATP-dependent exosome regulatory complex consisting of a helicase (MTREX), an oligadenylate polymerase (PAPD5 or PAPD7), and a substrate specific RNA-binding factor (ZCCHC7 or ZCCHC8). Several TRAMP-like complexes exist with specific compositions and are associated with nuclear, or nucleolar RNA exosomes.

The protein localises to the nucleus. Its subcellular location is the nucleolus. This chain is Zinc finger CCHC domain-containing protein 7 (zcchc7), found in Xenopus laevis (African clawed frog).